The following is a 152-amino-acid chain: Ribosome maturation factor RimP (152 aa).

The protein belongs to the RimP family.

It localises to the cytoplasm. Its function is as follows. Required for maturation of 30S ribosomal subunits. This chain is Ribosome maturation factor RimP, found in Teredinibacter turnerae (strain ATCC 39867 / T7901).